The chain runs to 231 residues: UPF0702 transmembrane protein YetF (231 aa).

A run of 3 helical transmembrane segments spans residues 5–25 (LSVA…LKLL), 33–53 (ITPF…NAVY), and 59–79 (IKEI…IEFI).

This sequence belongs to the UPF0702 family.

The protein localises to the cell membrane. The protein is UPF0702 transmembrane protein YetF (yetF) of Bacillus subtilis (strain 168).